Consider the following 267-residue polypeptide: 5'-methylthioadenosine nucleosidase (267 aa).

The active-site Proton acceptor is the glutamate 38. Residues threonine 116, 199-202 (KDME), and aspartate 225 contribute to the S-methyl-5'-thioadenosine site. Lysine 199 and aspartate 225 together coordinate adenine. Aspartate 225 (proton donor) is an active-site residue.

This sequence belongs to the PNP/UDP phosphorylase family. MtnN subfamily. In terms of assembly, homodimer. Interacts with CBL3 in a calcium-dependent manner. As to expression, expressed in roots, leaves, stems, cauline leaves and flowers.

It carries out the reaction S-methyl-5'-thioadenosine + H2O = 5-(methylsulfanyl)-D-ribose + adenine. It participates in amino-acid biosynthesis; L-methionine biosynthesis via salvage pathway; S-methyl-5-thio-alpha-D-ribose 1-phosphate from S-methyl-5'-thioadenosine (hydrolase route): step 1/2. Its activity is regulated as follows. Inhibited by CBL3 in a calcium-dependent manner. Inhibited by 5'-methylthiotubercidin (MTT) and by formycin A (FMA). Its function is as follows. Enzyme of the methionine cycle that catalyzes the irreversible cleavage of the glycosidic bond in 5'-methylthioadenosine (MTA) to adenine and 5'-methylthioribose. Contributes to the maintenance of AdoMet homeostasis and is required to sustain high rates of ethylene synthesis. Inactive towards S-adenosylhomocysteine (SAH/AdoHcy). In Arabidopsis thaliana (Mouse-ear cress), this protein is 5'-methylthioadenosine nucleosidase (MTN1).